The following is a 331-amino-acid chain: Protein RecA (331 aa).

ATP is bound at residue 66-73 (GPESSGKT).

Belongs to the RecA family.

It is found in the cytoplasm. Functionally, can catalyze the hydrolysis of ATP in the presence of single-stranded DNA, the ATP-dependent uptake of single-stranded DNA by duplex DNA, and the ATP-dependent hybridization of homologous single-stranded DNAs. It interacts with LexA causing its activation and leading to its autocatalytic cleavage. This is Protein RecA from Acholeplasma laidlawii (strain PG-8A).